We begin with the raw amino-acid sequence, 188 residues long: Mediator of RNA polymerase II transcription subunit 29 (188 aa).

Low complexity-rich tracts occupy residues 1–23 (MNPN…QSSP) and 30–43 (VQHQ…PLQQ). Residues 1 to 43 (MNPNMNMMPMSGPQMMQVMQSSPSGPPGPVQHQQQQPPQPLQQ) form a disordered region.

It belongs to the Mediator complex subunit 29 family. Component of the Mediator complex. Self-associates. Interacts with dsx.

It is found in the nucleus. Component of the Mediator complex, a coactivator involved in the regulated transcription of nearly all RNA polymerase II-dependent genes. Mediator functions as a bridge to convey information from gene-specific regulatory proteins to the basal RNA polymerase II transcription machinery. Mediator is recruited to promoters by direct interactions with regulatory proteins and serves as a scaffold for the assembly of a functional preinitiation complex with RNA polymerase II and the general transcription factors. Required for female somatic sexual development. The chain is Mediator of RNA polymerase II transcription subunit 29 (ix) from Drosophila melanogaster (Fruit fly).